Here is a 187-residue protein sequence, read N- to C-terminus: MNLQHHFLIAMPALQDPIFRRSVVYICEHNQDGAMGIIVNKPLENLQIEGILEKLKITPEPRDSAIRLDKAVMLGGPLAEDRGFILHTPPSRFASSIRISDNTVITTSRDVLETLGTQQQPSDVLVALGYASWDKGQLEQELLDNAWLTAPADLNILFKTPIAERWREAAKLIGIDILTMPGVAGHA.

The protein belongs to the UPF0301 (AlgH) family.

This chain is UPF0301 protein YqgE, found in Salmonella choleraesuis (strain SC-B67).